A 147-amino-acid polypeptide reads, in one-letter code: Deoxyuridine 5'-triphosphate nucleotidohydrolase (147 aa).

Arg24 provides a ligand contact to Mg(2+). DUTP-binding positions include 68-70 (PRS), 82-85 (GVID), Tyr88, Gly93, Ile95, and Arg111.

This sequence belongs to the dUTPase family. It depends on Mg(2+) as a cofactor.

It catalyses the reaction dUTP + H2O = dUMP + diphosphate + H(+). Its function is as follows. This enzyme is involved in nucleotide metabolism: it produces dUMP, the immediate precursor of thymidine nucleotides and it decreases the intracellular concentration of dUTP so that uracil cannot be incorporated into DNA. This chain is Deoxyuridine 5'-triphosphate nucleotidohydrolase (OPG046), found in Camelus.